A 95-amino-acid polypeptide reads, in one-letter code: Co-chaperonin GroES (95 aa).

Belongs to the GroES chaperonin family. Heptamer of 7 subunits arranged in a ring. Interacts with the chaperonin GroEL.

Its subcellular location is the cytoplasm. Its function is as follows. Together with the chaperonin GroEL, plays an essential role in assisting protein folding. The GroEL-GroES system forms a nano-cage that allows encapsulation of the non-native substrate proteins and provides a physical environment optimized to promote and accelerate protein folding. GroES binds to the apical surface of the GroEL ring, thereby capping the opening of the GroEL channel. In Rickettsia typhi (strain ATCC VR-144 / Wilmington), this protein is Co-chaperonin GroES.